Reading from the N-terminus, the 522-residue chain is L-tyrosine/L-DOPA decarboxylase 2 (522 aa).

Repeat copies occupy residues 75 to 132 (KDVH…TELE) and 135 to 186 (VMDW…GREH). The interval 75-186 (KDVHDDIVPG…RILDRIGREH (112 aa)) is 2 X approximate tandem repeats. 4 residues coordinate pyridoxal 5'-phosphate: T163, C164, T258, and N312. The residue at position 315 (K315) is an N6-(pyridoxal phosphate)lysine.

It belongs to the group II decarboxylase family. It depends on pyridoxal 5'-phosphate as a cofactor. As to expression, strongly expressed in all tissues, particularly in thick roots.

It catalyses the reaction L-tyrosine + H(+) = tyramine + CO2. The catalysed reaction is L-dopa + H(+) = dopamine + CO2. The protein operates within aromatic compound metabolism. It participates in alkaloid biosynthesis. Its function is as follows. Aromatic amino acid decarboxylase participating in the biosynthesis of natural products derived from phenylethylamine, including mescaline, a natural hallucinogen potentially used in psychotherapeutic treatments. Catalyzes the decarboxylation of L-tyrosine and L-DOPA. The chain is L-tyrosine/L-DOPA decarboxylase 2 from Lophophora williamsii (Peyote).